Reading from the N-terminus, the 386-residue chain is L-lactate dehydrogenase (386 aa).

An FMN hydroxy acid dehydrogenase domain is found at 1–380 (MIISASTDYR…TSDSLVQVTQ (380 aa)). Tyr24 contributes to the substrate binding site. FMN is bound by residues Ser106 and Gln127. Position 129 (Tyr129) interacts with substrate. Thr155 is a binding site for FMN. Arg164 serves as a coordination point for substrate. Lys251 is a binding site for FMN. His275 functions as the Proton acceptor in the catalytic mechanism. Substrate is bound at residue Arg278. An FMN-binding site is contributed by 306 to 330 (DSGIRSGLDVVRMIALGADGVMLGR).

The protein belongs to the FMN-dependent alpha-hydroxy acid dehydrogenase family. It depends on FMN as a cofactor.

Its subcellular location is the cell inner membrane. It carries out the reaction (S)-lactate + A = pyruvate + AH2. Functionally, catalyzes the conversion of L-lactate to pyruvate. Is coupled to the respiratory chain. In Pectobacterium atrosepticum (strain SCRI 1043 / ATCC BAA-672) (Erwinia carotovora subsp. atroseptica), this protein is L-lactate dehydrogenase.